We begin with the raw amino-acid sequence, 221 residues long: UPF0502 protein PSPTO_2686 (221 aa).

The protein belongs to the UPF0502 family.

The polypeptide is UPF0502 protein PSPTO_2686 (Pseudomonas syringae pv. tomato (strain ATCC BAA-871 / DC3000)).